The following is an 806-amino-acid chain: MNYNHNQIEKKWQDYWDENKTFKTNDNLGQKKFYALDMFPYPSGAGLHVGHPEGYTATDIISRYKRMQGYNVLHPMGWDAFGLPAEQYALDTGNDPREFTKKNIQTFKRQIKELGFSYDWDREVNTTDPEYYKWTQWIFIQLYNKGLAYVDEVAVNWCPALGTVLSNEEVIDGVSERGGHPVYRKPMKQWVLKITEYADQLLADLDDLDWPESLKDMQRNWIGRSEGAKVSFDVDNTEAEGKVEVFTTRPDTIYGASFLVLSPEHALVNSITTDEYKEKVKAYQTEASKKSDLERTDLAKDKSGVFTGAYAINPLSGEKVQIWIADYVLSTYGTGAIMAVPAHDDRDYEFAKKFDLPIIEVIEGGNVEEAAYTGEGKHINSGELDGLENEAAITKAIQLLEQKGAGEKKVNYKLRDWLFSRQRYWGEPIPVIHWEDGTMTTVPEEELPLLLPETDEIKPSGTGESPLANIDSFVNVVDEKTGMKGRRETNTMPQWAGSCWYYLRYIDPKNENMLADPEKLKHWLPVDLYIGGVEHAVLHLLYARFWHKVLYDLGIVPTKEPFQKLFNQGMILGEGNEKMSKSKGNVINPDDIVQSHGADTLRLYEMFMGPLDAAIAWSEKGLDGSRRFLDRVWRLMVNEDGTLSSKIVTTNNKSLDKVYNQTVKKVTEDFETLGFNTAISQLMVFINECYKVDEVYKPYIEGFVKMLAPIAPHIGEELWSKLGHEESITYQPWPTYDEALLVDDEVEIVVQVNGKLRAKIKIAKDTSKEEMQEIALSNDNVKASIEGKDIMKVIAVPQKLVNIVAK.

The short motif at 40-51 (PYPSGAGLHVGH) is the 'HIGH' region element. Residues 578–582 (KMSKS) carry the 'KMSKS' region motif. Lysine 581 provides a ligand contact to ATP.

This sequence belongs to the class-I aminoacyl-tRNA synthetase family.

Its subcellular location is the cytoplasm. The enzyme catalyses tRNA(Leu) + L-leucine + ATP = L-leucyl-tRNA(Leu) + AMP + diphosphate. This chain is Leucine--tRNA ligase, found in Staphylococcus aureus (strain MSSA476).